A 91-amino-acid chain; its full sequence is Putative membrane protein insertion efficiency factor (91 aa).

The interval 66-91 is disordered; sequence GGVDPVPSCGCHSDKETTPKEKSDNA. Residues 77 to 91 show a composition bias toward basic and acidic residues; it reads HSDKETTPKEKSDNA.

It belongs to the UPF0161 family.

It is found in the cell inner membrane. Functionally, could be involved in insertion of integral membrane proteins into the membrane. In Hydrogenovibrio crunogenus (strain DSM 25203 / XCL-2) (Thiomicrospira crunogena), this protein is Putative membrane protein insertion efficiency factor.